The following is a 564-amino-acid chain: Acetylcholine receptor subunit alpha-type deg-3 (564 aa).

A signal peptide spans 1–20 (MTLKIRTIIILFCVISVTTT). Residues 21–268 (SQSLNATLKT…SLVIQRKPLY (248 aa)) are Extracellular-facing. 4 N-linked (GlcNAc...) asparagine glycosylation sites follow: Asn25, Asn37, Asn125, and Asn198. Disulfide bonds link Cys185/Cys199 and Cys248/Cys249. The next 3 helical transmembrane spans lie at 269-289 (YLVNLIIPTSIITLVAITGFF), 302-319 (INLGITTLLAMSILMLMV), and 329-353 (FVPLIAWFYLSIIIIISIGTFLTSV). The Cytoplasmic portion of the chain corresponds to 354–526 (VLSVQGRRQY…WEFLATVLDR (173 aa)). The helical transmembrane segment at 527-547 (FLLIVFVGAVVIVTAGLILVG) threads the bilayer.

Belongs to the ligand-gated ion channel (TC 1.A.9) family. Acetylcholine receptor (TC 1.A.9.1) subfamily. In terms of assembly, the functional receptor is a heteromer of deg-3 and des-2. Interacts with ric-3; which is required for proper receptor folding.

It is found in the postsynaptic cell membrane. Its subcellular location is the cell membrane. In terms of biological role, subunit of the non-synaptic neuronal acetylcholine receptor, which may play a role in chemotaxis towards choline. After binding choline or acetylcholine, the AChR responds by an extensive change in conformation that affects all subunits and leads to opening of an ion-conducting channel across the plasma membrane. This Caenorhabditis elegans protein is Acetylcholine receptor subunit alpha-type deg-3 (deg-3).